Reading from the N-terminus, the 94-residue chain is Co-chaperonin GroES (94 aa).

It belongs to the GroES chaperonin family. As to quaternary structure, heptamer of 7 subunits arranged in a ring. Interacts with the chaperonin GroEL.

It localises to the cytoplasm. Functionally, together with the chaperonin GroEL, plays an essential role in assisting protein folding. The GroEL-GroES system forms a nano-cage that allows encapsulation of the non-native substrate proteins and provides a physical environment optimized to promote and accelerate protein folding. GroES binds to the apical surface of the GroEL ring, thereby capping the opening of the GroEL channel. This Bacillus cereus (strain ZK / E33L) protein is Co-chaperonin GroES.